The sequence spans 625 residues: tRNA uridine 5-carboxymethylaminomethyl modification enzyme MnmG (625 aa).

Residues 11 to 16 (GAGHAG), Val123, and Ser178 contribute to the FAD site. 271 to 285 (GPRYCPSIETKIVTF) serves as a coordination point for NAD(+). Gln368 serves as a coordination point for FAD.

This sequence belongs to the MnmG family. As to quaternary structure, homodimer. Heterotetramer of two MnmE and two MnmG subunits. It depends on FAD as a cofactor.

Its subcellular location is the cytoplasm. Its function is as follows. NAD-binding protein involved in the addition of a carboxymethylaminomethyl (cmnm) group at the wobble position (U34) of certain tRNAs, forming tRNA-cmnm(5)s(2)U34. This is tRNA uridine 5-carboxymethylaminomethyl modification enzyme MnmG from Bacteroides fragilis (strain ATCC 25285 / DSM 2151 / CCUG 4856 / JCM 11019 / LMG 10263 / NCTC 9343 / Onslow / VPI 2553 / EN-2).